The primary structure comprises 807 residues: Glycerol-3-phosphate acyltransferase (807 aa).

The HXXXXD motif signature appears at 308-313 (CHRSHM).

This sequence belongs to the GPAT/DAPAT family.

Its subcellular location is the cell inner membrane. It catalyses the reaction sn-glycerol 3-phosphate + an acyl-CoA = a 1-acyl-sn-glycero-3-phosphate + CoA. It functions in the pathway phospholipid metabolism; CDP-diacylglycerol biosynthesis; CDP-diacylglycerol from sn-glycerol 3-phosphate: step 1/3. This Shewanella denitrificans (strain OS217 / ATCC BAA-1090 / DSM 15013) protein is Glycerol-3-phosphate acyltransferase.